We begin with the raw amino-acid sequence, 184 residues long: Spiro-conjugate synthase (184 aa).

Residues cysteine 57 and cysteine 184 are joined by a disulfide bond. Glutamine 115 contacts (1S,3R,6R,8R,9R,11R,14S,15S,19R,20R)-8-ethyl-9,15-dihydroxy-3,4,6,20-tetramethyl-21,23-dioxo-24-azapentacyclo[20.2.1.0(1,6).0(11,20).0(14,19)]pentacosa-4,12,22(25)-trien-25-olate.

As to quaternary structure, homodimer.

The catalysed reaction is 4-[(1R,2R,4aS,5S,8aR)-2-[(2R,3R,5E,7E)-3-ethyl-2-hydroxy-5,7-dimethylnona-5,7-dien-1-yl]-5-hydroxy-1-methyl-1,2,4a,5,6,7,8,8a-octahydronaphthalene-1-carbonyl]-2-methylidene-5-oxo-2,5-dihydro-1H-pyrrol-3-olate = (1S,3R,6R,8R,9R,11R,14S,15S,19R,20R)-8-ethyl-9,15-dihydroxy-3,4,6,20-tetramethyl-21,23-dioxo-24-azapentacyclo[20.2.1.0(1,6).0(11,20).0(14,19)]pentacosa-4,12,22(25)-trien-25-olate. The protein operates within antibiotic biosynthesis. Functionally, involved in the biosynthesis of the spirotetramate antibiotics pyrroindomycins. Catalyzes the intramolecular cyclization forming the spiro-conjugate moiety in pyrroindomycins, via an exo-selective [4+2] cycloaddition reaction. In Streptomyces rugosporus, this protein is Spiro-conjugate synthase.